Here is a 1083-residue protein sequence, read N- to C-terminus: MDNHGPRYPYPYGQYPYPYPYPAPYRPPSSEPYPPPPTNQYSAPYYPYPPPPYATPPPYASPPPPHQHTSGSHSGPLDYSHNPQPSSLAAAPPEYHRHSFDYQPSPYPYQPQGNFGAYGPPPPHYSYQEPAQYPPPETKPQEPLPPPQQTQGFQEYRRQDCLSTGGTGHDNVSNSGSSYPPVDELLGGLHISTNQPGPSVPQLSSLPSNSWQSRPGDLYGYPNSSFPSNSHLPQLGRVDSSSSYYASTESPHSADMQMTLFGKGSLKVLLLHGNLDIWIYHAKNLPNMDMFHKTLGDMFGRLPGKIEGQLTSKITSDPYVSVSVAGAVIGRTYVMSNSENPVWMQHFYVPVAHHAAEVHFVVKDSDVVGSQLIGLVTIPVEQIYSGAKIEGTYPILNSNGKPCKPGANLSLSIQYTPMDKLSVYHHGVGAGPDYQGVPGTYFPLRKGGTVRLYQDAHVPEGMLPGIRLDNGMSYEHGKCWHDMFDAIRQARRLIYITGWSVWHKVKLIRDKLGPASECTLGELLRSKSQEGVRVLLLIWDDPTSRSILGYKTDGVMATHDEETRRFFKHSSVQVLLCPRNAGKRHSWVKQREVGTIYTHHQKNVIVDADAGGNRRKIIAFVGGLDLCDGRYDTPQHPLFRTLQTIHKDDFHNPTFTGNLSGCPREPWHDLHSKIDGPAAYDVLTNFEERWLKAAKPSGIKKFKTSYDDALLRIDRIPDILGVSDTPTVSENDPEAWHVQIFRSIDSNSVKGFPKDPKDATCKNLVCGKNVLIDMSIHTAYVKAIRAAQHFIYIENQYFIGSSYNWNAHKDIGANNLIPMEIALKIAEKIRANERFAAYIVIPMWPEGVPTGAATQRILYWQHKTIQMMYETIYKALVETGLEGAFSPQDYLNFFCLGNREMVDGIDNSGTGSPSNANTPQALSRKSRRFMVYVHSKGMVVDDEYVVIGSANINQRSMEGTRDTEIAMGAYQPQHTWARKHSGPRGQIYGYRMSLWAEHMATLDDCFTQPESIECVRKVRTMGERNWKQFAAEEVSDMRGHLLKYPVEVDRKGKVRPLPGSETFPDVGGNIVGSFIAIQENLTI.

Composition is skewed to pro residues over residues 26-38 (RPPSSEPYPPPPT), 46-66 (YPYPPPPYATPPPYASPPPPH), and 132-148 (QYPPPETKPQEPLPPPQ). The segment at 26–231 (RPPSSEPYPP…PNSSFPSNSH (206 aa)) is disordered. Polar residues-rich tracts occupy residues 191–213 (ISTNQPGPSVPQLSSLPSNSWQS) and 222–231 (PNSSFPSNSH). The C2 domain occupies 252–393 (HSADMQMTLF…YSGAKIEGTY (142 aa)). D455 contacts Ca(2+). The PLD phosphodiesterase 1 domain maps to 595–630 (TIYTHHQKNVIVDADAGGNRRKIIAFVGGLDLCDGR). Catalysis depends on residues H600, K602, and D607. H600 contacts a 1,2-diacyl-sn-glycero-3-phosphate. Residues H636 and H668 each coordinate Ca(2+). A 1,2-diacyl-sn-glycero-3-phosphate contacts are provided by Q796 and H934. The PLD phosphodiesterase 2 domain maps to 929–956 (FMVYVHSKGMVVDDEYVVIGSANINQRS). Active-site residues include H934, K936, and D941. E997 is a Ca(2+) binding site.

It belongs to the phospholipase D family. C2-PLD subfamily. Ca(2+) serves as cofactor. Expressed in stems, and to a lower amount in leaves, flowers and siliques.

The protein resides in the cytoplasm. It is found in the membrane. The enzyme catalyses a 1,2-diacyl-sn-glycero-3-phosphocholine + H2O = a 1,2-diacyl-sn-glycero-3-phosphate + choline + H(+). Inhibited by neomycin. Up-regulated by PIP2 binding. Its function is as follows. Hydrolyzes glycerol-phospholipids at the terminal phosphodiesteric bond to generate phosphatidic acids (PA). Plays an important role in various cellular processes, including phytohormone action, vesicular trafficking, secretion, cytoskeletal arrangement, meiosis, tumor promotion, pathogenesis, membrane deterioration and senescence. Involved in regulating stomatal movement and plant-water status. Can use phosphatidylserine (PS) and phosphatidylethanolamine (PE) as substrates only in the presence of PIP2. Can use phosphatidylcholine (PC), phosphatidylglycerol (PG) or N-acylphosphatidylethanolamine (NAPE) as substrates in the presence of PE and PIP2. Modulates defense responses to bacterial and fungal pathogens. This chain is Phospholipase D beta 1, found in Arabidopsis thaliana (Mouse-ear cress).